We begin with the raw amino-acid sequence, 68 residues long: Large ribosomal subunit protein bL33c (68 aa).

It belongs to the bacterial ribosomal protein bL33 family.

It is found in the plastid. This is Large ribosomal subunit protein bL33c from Cuscuta exaltata (Tall dodder).